The primary structure comprises 84 residues: Hepcidin (84 aa).

Positions Met1–Gly24 are cleaved as a signal peptide. The propeptide occupies Ser25–Gln54. 4 disulfide bridges follow: Cys66-Cys82, Cys69-Cys72, Cys70-Cys78, and Cys73-Cys81.

It belongs to the hepcidin family. In terms of assembly, interacts with SLC40A1; this interaction promotes SLC40A1 rapid ubiquitination. In terms of tissue distribution, highest expression in liver and to a lesser extent in heart and brain. Low levels in lung, tonsils, salivary gland, trachea, prostate gland, adrenal gland and thyroid gland. Secreted into the urine and blood. Expressed by hepatocytes.

The protein resides in the secreted. Its function is as follows. Liver-produced hormone that constitutes the main circulating regulator of iron absorption and distribution across tissues. Acts by promoting endocytosis and degradation of ferroportin/SLC40A1, leading to the retention of iron in iron-exporting cells and decreased flow of iron into plasma. Controls the major flows of iron into plasma: absorption of dietary iron in the intestine, recycling of iron by macrophages, which phagocytose old erythrocytes and other cells, and mobilization of stored iron from hepatocytes. Functionally, has strong antimicrobial activity against E.coli ML35P N.cinerea and weaker against S.epidermidis, S.aureus and group b streptococcus bacteria. Active against the fungus C.albicans. No activity against P.aeruginosa. The polypeptide is Hepcidin (Homo sapiens (Human)).